A 241-amino-acid chain; its full sequence is Beta-nerve growth factor (241 aa).

A signal peptide spans 1 to 18 (MSMLFYTLITALLIGIQA). The propeptide occupies 19 to 121 (APHTESNVPA…SFNRTHRSKR (103 aa)). 3 disulfides stabilise this stretch: Cys-136-Cys-201, Cys-179-Cys-229, and Cys-189-Cys-231. A glycan (N-linked (GlcNAc...) asparagine) is linked at Asn-166. A 1-acyl-sn-glycero-3-phospho-(1D-myo-inositol) is bound by residues Tyr-173 and Lys-209. Lys-209 provides a ligand contact to a 1-acyl-sn-glycero-3-phospho-L-serine.

Belongs to the NGF-beta family. Homodimer. The homodimer interacts with a single NTRK1 chain. The homodimer interacts with a single NGFR chain. The NGF dimer interacts with a single SORCS2 chain (via extracellular domain). The NGF precursor (proNGF) binds to a receptor complex formed by SORT1 and NGFR, which leads to NGF endocytosis. Both mature NGF and the immature NGF precursor (proNGF) interact with SORCS2 and with the heterodimer formed by SORCS2 and NGFR (via extracellular domains). The NGF precursor (proNGF) has much higher affinity for SORCS2 than mature NGF. The NGF precursor (proNGF) has much higher affinity for SORT1 than mature NGF. Interacts with ADAM10 in a divalent cation-dependent manner. Interacts with SORCS3.

The protein resides in the secreted. The protein localises to the endosome lumen. In terms of biological role, nerve growth factor is important for the development and maintenance of the sympathetic and sensory nervous systems. Extracellular ligand for the NTRK1 and NGFR receptors, activates cellular signaling cascades to regulate neuronal proliferation, differentiation and survival. The immature NGF precursor (proNGF) functions as a ligand for the heterodimeric receptor formed by SORCS2 and NGFR, and activates cellular signaling cascades that lead to inactivation of RAC1 and/or RAC2, reorganization of the actin cytoskeleton and neuronal growth cone collapse. In contrast to mature NGF, the precursor form (proNGF) promotes neuronal apoptosis (in vitro). Inhibits metalloproteinase-dependent proteolysis of platelet glycoprotein VI. Binds lysophosphatidylinositol and lysophosphatidylserine between the two chains of the homodimer. The lipid-bound form promotes histamine relase from mast cells, contrary to the lipid-free form. In Bos taurus (Bovine), this protein is Beta-nerve growth factor (NGF).